The following is a 463-amino-acid chain: Sialic acid-binding Ig-like lectin 9 (463 aa).

Residues 1-17 (MLLLLLPLLWGRERAEG) form the signal peptide. Residues 18–348 (QTSKLLTMQS…SKATSGVTQG (331 aa)) lie on the Extracellular side of the membrane. Residues 20 to 140 (SKLLTMQSSV…KHHRLSVNVT (121 aa)) form the Ig-like V-type domain. Disulfide bonds link cysteine 36-cysteine 170, cysteine 41-cysteine 102, and cysteine 164-cysteine 213. Residue asparagine 101 is glycosylated (N-linked (GlcNAc...) asparagine). Arginine 120 contributes to the N-acetylneuraminate binding site. 2 N-linked (GlcNAc...) asparagine glycosylation sites follow: asparagine 138 and asparagine 161. In terms of domain architecture, Ig-like C2-type 1 spans 146 to 229 (PNILIPGTLE…ASVTTNKTVH (84 aa)). Residues asparagine 225, asparagine 231, asparagine 238, and asparagine 256 are each glycosylated (N-linked (GlcNAc...) asparagine). The Ig-like C2-type 2 domain maps to 236 to 336 (PQNLTMTVFQ…GSQQVYLNVS (101 aa)). Cysteine 272 and cysteine 320 are joined by a disulfide. Asparagine 334 is a glycosylation site (N-linked (GlcNAc...) asparagine). The helical transmembrane segment at 349 to 369 (VVGGAGATALVFLSFCVIFVV) threads the bilayer. Residues 370–463 (VRSCRKKSAR…TEYSEIKIHR (94 aa)) are Cytoplasmic-facing. The interval 380–428 (PAAGVGDTGIEDANAVRGSASQGPLTEPWAEDSPPDQPPPASARSSVGE) is disordered. The short motif at 431 to 436 (LQYASL) is the ITIM motif element. A disordered region spans residues 444 to 463 (WDSRGQEATDTEYSEIKIHR). Residues 454 to 459 (TEYSEI) carry the SLAM-like motif motif.

This sequence belongs to the immunoglobulin superfamily. SIGLEC (sialic acid binding Ig-like lectin) family. In terms of tissue distribution, expressed by peripheral blood leukocytes (neutrophils and monocytes but not eosinophils). Found in liver, fetal liver, bone marrow, placenta, spleen and in lower levels in skeletal muscle, fetal brain, stomach, lung, thymus, prostate, brain, mammary, adrenal gland, colon, trachea, cerebellum, testis, small intestine and spinal cordon.

It localises to the membrane. Functionally, putative adhesion molecule that mediates sialic-acid dependent binding to cells. Preferentially binds to alpha-2,3- or alpha-2,6-linked sialic acid. The sialic acid recognition site may be masked by cis interactions with sialic acids on the same cell surface. This Homo sapiens (Human) protein is Sialic acid-binding Ig-like lectin 9 (SIGLEC9).